A 245-amino-acid polypeptide reads, in one-letter code: Ribosomal RNA small subunit methyltransferase G (245 aa).

Residues Gly79, Phe84, Ala130–Glu131, and Arg150 each bind S-adenosyl-L-methionine.

Belongs to the methyltransferase superfamily. RNA methyltransferase RsmG family.

Its subcellular location is the cytoplasm. In terms of biological role, specifically methylates the N7 position of a guanine in 16S rRNA. This is Ribosomal RNA small subunit methyltransferase G from Limosilactobacillus fermentum (strain NBRC 3956 / LMG 18251) (Lactobacillus fermentum).